The following is a 219-amino-acid chain: Cysteine dioxygenase (219 aa).

The Fe cation site is built by histidine 106, histidine 108, and histidine 166. The 3'-(S-cysteinyl)-tyrosine (Cys-Tyr) cross-link spans 113–183; sequence CVMKILHGSL…NDFAISLHLY (71 aa).

This sequence belongs to the cysteine dioxygenase family. Requires Fe cation as cofactor. The thioether cross-link between Cys-113 and Tyr-183 plays a structural role through stabilizing the Fe(2+) ion, and prevents the production of highly damaging free hydroxyl radicals by holding the oxygen radical via hydroxyl hydrogen.

It carries out the reaction L-cysteine + O2 = 3-sulfino-L-alanine + H(+). In terms of biological role, cysteine dioxygenase involved in sulfite formation from cysteine. Required for keratin degradation and plays an important role in filamentous growth and virulence. This Arthroderma benhamiae (Trichophyton mentagrophytes) protein is Cysteine dioxygenase.